The chain runs to 205 residues: Ras-related protein Rab-1A (205 aa).

At S2 the chain carries N-acetylserine. S20, G21, G23, K24, S25, C26, E38, and T43 together coordinate GTP. S25 contacts Mg(2+). A Switch 1 motif is present at residues 34 to 48 (DTYTESYISTIGVDF). Residue T43 coordinates Mg(2+). Residues K49 and K61 each participate in a glycyl lysine isopeptide (Lys-Gly) (interchain with G-Cter in ubiquitin) cross-link. Mg(2+) is bound at residue D66. Positions 66–83 (DTAGQERFRTITSSYYRG) match the Switch 2 motif. G69, N124, K125, D127, A155, and K156 together coordinate GTP. Positions 178–205 (PGATAGGAEKSNVKIQSTPVKQSGGGCC) are disordered. The residue at position 194 (S194) is a Phosphoserine. Residues C204 and C205 are each lipidated (S-geranylgeranyl cysteine).

It belongs to the small GTPase superfamily. Rab family. May interact with YIPF5. Interacts with C9orf72; the interaction mediates recruitment of RAB1A to the ATG1/ULK1 kinase complex. Interacts with GDI1; this promotes dissociation from membranes. Mg(2+) serves as cofactor. In terms of processing, phosphorylated by CDK1 kinase during mitosis. Ubiquitinated via 'Lys-11'-linked ubiquitination on Lys-49 and Lys-61; impairing the recruitment of guanosine diphosphate (GDP) dissociation inhibitor 1/GDI1.

The protein resides in the golgi apparatus. Its subcellular location is the endoplasmic reticulum. It is found in the early endosome. The protein localises to the cytoplasm. It localises to the cytosol. The protein resides in the membrane. Its subcellular location is the melanosome. The catalysed reaction is GTP + H2O = GDP + phosphate + H(+). Its activity is regulated as follows. Regulated by guanine nucleotide exchange factors (GEFs) which promote the exchange of bound GDP for free GTP. Regulated by GTPase activating proteins (GAPs) which increase the GTP hydrolysis activity. Inhibited by GDP dissociation inhibitors (GDIs). Its function is as follows. The small GTPases Rab are key regulators of intracellular membrane trafficking, from the formation of transport vesicles to their fusion with membranes. Rabs cycle between an inactive GDP-bound form and an active GTP-bound form that is able to recruit to membranes different sets of downstream effectors directly responsible for vesicle formation, movement, tethering and fusion. RAB1A regulates vesicular protein transport from the endoplasmic reticulum (ER) to the Golgi compartment and on to the cell surface, and plays a role in IL-8 and growth hormone secretion. Required to modulate the compacted morphology of the Golgi. Regulates the level of CASR present at the cell membrane. Plays a role in cell adhesion and cell migration, via its role in protein trafficking. Plays a role in autophagosome assembly and cellular defense reactions against pathogenic bacteria. Plays a role in microtubule-dependent protein transport by early endosomes and in anterograde melanosome transport. In Canis lupus familiaris (Dog), this protein is Ras-related protein Rab-1A (RAB1A).